We begin with the raw amino-acid sequence, 88 residues long: Putative regulatory protein Npun_R3866 (88 aa).

Belongs to the RemA family.

This Nostoc punctiforme (strain ATCC 29133 / PCC 73102) protein is Putative regulatory protein Npun_R3866.